Reading from the N-terminus, the 61-residue chain is Disintegrin rubistatin (61 aa).

The Disintegrin domain occupies 1–61 (NPCCDAATCK…ADCPRNGLYG (61 aa)). Cystine bridges form between Cys-3–Cys-26, Cys-17–Cys-23, Cys-22–Cys-47, and Cys-35–Cys-54. A Cell attachment site; atypical (MVD) motif is present at residues 39 to 41 (MVD).

This sequence belongs to the venom metalloproteinase (M12B) family. P-II subfamily. P-IIa sub-subfamily. As to quaternary structure, monomer. In terms of tissue distribution, expressed by the venom gland.

It is found in the secreted. In terms of biological role, recombinant disintegrin rubistatin inhibits ADP-induced platelet aggregation. In addition, it strongly induces apoptosis, and inhibits cell migration and proliferation of the human cancer cell line SK-Mel-28. The protein is Disintegrin rubistatin of Crotalus ruber ruber (Red diamond rattlesnake).